Here is a 550-residue protein sequence, read N- to C-terminus: PAB1-binding protein 1 (550 aa).

The Sm domain occupies 11-95 (RLEYLYLNLV…IVMIEVQNAK (85 aa)). Disordered regions lie at residues 201–296 (HDDE…HKRM) and 441–550 (GMGN…RVGK). The segment covering 214 to 223 (DVHRPQEKKP) has biased composition (basic and acidic residues). The span at 244-262 (AAAAPATAPTTAPAAAPAP) shows a compositional bias: low complexity. The span at 263 to 281 (AAAPPAAAPAAAAPPPPPA) shows a compositional bias: pro residues.

Belongs to the ataxin-2 family. Forms a complex composed of at least MKT1, PBP1, XAC1 and LSM12. Forms a complex composed of at least MKT1L, PBP1, XAC1 and LSM12. Within the complex, interacts with MKT1 (via C-terminus); the interaction is direct. Interacts (via C-terminus) with ZC3H11; the interaction is direct.

The protein localises to the cytoplasm. It localises to the cytosol. It is found in the stress granule. Functionally, involved in post-transcriptional regulation of gene expression. Promotes mRNA stabilization by bridging poly(A)-binding protein to mRNAs. In Trypanosoma brucei brucei (strain 927/4 GUTat10.1), this protein is PAB1-binding protein 1.